The following is a 797-amino-acid chain: RAS guanyl-releasing protein 1 (797 aa).

Basic and acidic residues predominate over residues 1–12; that stretch reads MGTLGKAREAPR. The tract at residues 1–23 is disordered; the sequence is MGTLGKAREAPRKPSHGCRAASK. An N-terminal Ras-GEF domain is found at 53 to 176; that stretch reads LGHLAKGASL…RLIDTTQINA (124 aa). A ras exchanger motif region; required for transforming activity region spans residues 57–110; that stretch reads AKGASLDDLIDSCIQSFDADGNLCRSNQLLQVMLTMHRIVISSAELLQKVITLY. At threonine 184 the chain carries Phosphothreonine; by PKC. Positions 205-436 constitute a Ras-GEF domain; the sequence is EPEELSEHLT…YELSYAREPR (232 aa). EF-hand domains lie at 470–505 and 506–532; these read HVQR…FPFS and FCVM…ASSI. Ca(2+) contacts are provided by aspartate 483, aspartate 485, aspartate 487, tyrosine 489, and glutamate 494. The Phorbol-ester/DAG-type zinc finger occupies 541 to 591; it reads PHNFQETTYLKPTFCDNCAGFLWGVIKQGYRCKDCGMNCHKQCKDLVVFEC. Residues 673 to 694 are disordered; sequence TQTESQPWIGSEGPSGPFVLSS. Residues 686–694 form a suppress the PT region-mediated translocation to plasma membrane region; sequence PSGPFVLSS. Positions 718–797 are PT region; mediates the BCR-dependent translocation to plasma membrane; it reads LVRKRAFVKW…LAQMEQGDCS (80 aa). Residues 746–786 adopt a coiled-coil conformation; that stretch reads PTYQELEQEINTLKADNDALKIQLKYAQKKIESLQLEKSNH.

It belongs to the RASGRP family. Homodimer. Forms a signaling complex with DGKZ and HRAS. Interacts with F-actin. Interacts with SKAP1. In terms of tissue distribution, expressed in brain with higher expression in cerebellum, cerebral cortex and amygdala. Expressed in the hematopoietic system. Expressed in T-cells (at protein level). Expressed in NK cells (at protein level).

The protein resides in the cytoplasm. It is found in the cytosol. Its subcellular location is the cell membrane. The protein localises to the golgi apparatus membrane. It localises to the endoplasmic reticulum membrane. Autoinhibited. Activated by diacylglycerol and calcium binding, which induces a conformational change releasing the autoinhibitory state. Regulated by DGKA. Regulated by DGKZ. Regulated by PLC gamma and F-actin polymerization. Functionally, functions as a calcium- and diacylglycerol (DAG)-regulated nucleotide exchange factor specifically activating Ras through the exchange of bound GDP for GTP. Activates the Erk/MAP kinase cascade. Regulates T-cell/B-cell development, homeostasis and differentiation by coupling T-lymphocyte/B-lymphocyte antigen receptors to Ras. Regulates NK cell cytotoxicity and ITAM-dependent cytokine production by activation of Ras-mediated ERK and JNK pathways. Functions in mast cell degranulation and cytokine secretion, regulating FcERI-evoked allergic responses. May also function in differentiation of other cell types. The polypeptide is RAS guanyl-releasing protein 1 (RASGRP1) (Homo sapiens (Human)).